Consider the following 343-residue polypeptide: Heat-inducible transcription repressor HrcA (343 aa).

The protein belongs to the HrcA family.

Negative regulator of class I heat shock genes (grpE-dnaK-dnaJ and groELS operons). Prevents heat-shock induction of these operons. The polypeptide is Heat-inducible transcription repressor HrcA (Caldanaerobacter subterraneus subsp. tengcongensis (strain DSM 15242 / JCM 11007 / NBRC 100824 / MB4) (Thermoanaerobacter tengcongensis)).